The primary structure comprises 996 residues: Disease resistance protein RGA4 (996 aa).

The tract at residues 1–176 (MEAALLSGFI…PRIHEADLVG (176 aa)) is structured coiled coil (CC) domain. Residues 111–138 (NLQLAQQLQRLKRMAAEANQRKQRYTAA) adopt a coiled-coil conformation. In terms of domain architecture, NB-ARC spans 180–462 (DREELLEQLA…RWLAEGFVEP (283 aa)). LRR repeat units lie at residues 481–503 (RNII…TYGM), 504–528 (MREF…KFVP), 529–549 (KYVR…NFNG), 577–599 (LRVL…ICNL), 600–621 (VLLK…IAKL), 622–644 (KDLE…VFGL), 698–722 (MNKL…DLRE), 759–781 (PCYL…VTSL), 782–804 (RGLK…ALSN), 805–830 (LSYL…GFPR), and 851–874 (LPFL…QIEC).

The protein belongs to the disease resistance NB-LRR family. As to quaternary structure, forms homodimer or heterodimer with RGA5 through its coiled coil (CC) domain. In terms of tissue distribution, expressed in leaves.

Its subcellular location is the cytoplasm. Its function is as follows. Disease resistance (R) protein. Resistance proteins guard the plant against pathogens that contain an appropriate avirulence protein via an indirect interaction with this avirulence protein. That triggers a defense system including the hypersensitive response, which restricts the pathogen growth. Contribution of RGA5 is required to recognize the effector avirulence proteins AVR-Pia and AVR1-CO39 from M.oryzae. Acts as a constitutively active cell death inducer that is repressed by RGA5. Immune response triggered by the RGA4-RGA5 -mediated recognition of AVR1-CO39 confers resistance to X.oryzae pathovars. The sequence is that of Disease resistance protein RGA4 from Oryza sativa subsp. japonica (Rice).